The chain runs to 20 residues: Agglutinin beta-1 chain (20 aa).

Residues 1–11 (NEQSGKSQTVI) are compositionally biased toward polar residues. Residues 1-20 (NEQSGKSQTVIVGSWGAKVS) form a disordered region.

It belongs to the jacalin lectin family. Tetramer of four alpha chains associated with two or four beta chains.

Functionally, D-galactose-specific lectin, binds the T-antigen structure Gal-beta1,3-GalNAc (Thomsen-Friedenreich-antigen-specific lectin). Potent and selective stimulant of distinct T- and B-cell functions. Shows a unique ability to specifically recognize IgA-1 from human serum. This is Agglutinin beta-1 chain from Artocarpus integer (Jack fruit).